A 60-amino-acid polypeptide reads, in one-letter code: Large ribosomal subunit protein bL33 (60 aa).

Belongs to the bacterial ribosomal protein bL33 family.

The protein is Large ribosomal subunit protein bL33 of Christiangramia forsetii (strain DSM 17595 / CGMCC 1.15422 / KT0803) (Gramella forsetii).